Reading from the N-terminus, the 253-residue chain is uncharacterized protein (253 aa).

This is an uncharacterized protein from Acanthamoeba polyphaga mimivirus (APMV).